The chain runs to 193 residues: MHINEETDWIDLVKPALAKKPKKIVDNSDKFPTPRGFQQKSLVSKNIHSGNSASSTSIFAKREEELQKDLLLKKAWELAYSPLKQIPMNAILAYMSGNSLQIFSIMTTLMLLVNPLKAITSTGSAFTPFKGTHPGTLWPAMGAYILFQLLLMGIGVYKLQRMGLLPTTTSDWLAWEVSKVFMDRSYGPSKTVL.

2 consecutive transmembrane segments (helical) span residues 91-111 and 137-157; these read ILAY…TLML and LWPA…IGVY.

This sequence belongs to the EMC4 family.

The protein resides in the endoplasmic reticulum membrane. In Schizosaccharomyces pombe (strain 972 / ATCC 24843) (Fission yeast), this protein is ER membrane protein complex subunit 4.